A 219-amino-acid polypeptide reads, in one-letter code: Proteasome subunit beta type-9 (219 aa).

Residues 1 to 20 constitute a propeptide, removed in mature form; that stretch reads MLRAGAPTAGSFRTEEVHTG. The active-site Nucleophile is T21. Residues K53 and K109 each carry the N6-acetyllysine modification.

It belongs to the peptidase T1B family. The 26S proteasome consists of a 20S proteasome core and two 19S regulatory subunits. The 20S proteasome core is composed of 28 subunits that are arranged in four stacked rings, resulting in a barrel-shaped structure. The two end rings are each formed by seven alpha subunits, and the two central rings are each formed by seven beta subunits. The catalytic chamber with the active sites is on the inside of the barrel. Component of the immunoproteasome, where it displaces the equivalent housekeeping subunit PSMB6. Component of the spermatoproteasome, a form of the proteasome specifically found in testis. In terms of processing, autocleaved. The resulting N-terminal Thr residue of the mature subunit is responsible for the nucleophile proteolytic activity.

The protein resides in the cytoplasm. The protein localises to the nucleus. It carries out the reaction Cleavage of peptide bonds with very broad specificity.. Its function is as follows. The proteasome is a multicatalytic proteinase complex which is characterized by its ability to cleave peptides with Arg, Phe, Tyr, Leu, and Glu adjacent to the leaving group at neutral or slightly basic pH. The proteasome has an ATP-dependent proteolytic activity. This subunit is involved in antigen processing to generate class I binding peptides. This is Proteasome subunit beta type-9 (Psmb9) from Mus terricolor (Earth-colored mouse).